The primary structure comprises 65 residues: Sec-independent protein translocase protein TatA (65 aa).

The chain crosses the membrane as a helical span at residues 1–21 (MFGLGGQELVLILLIILLLFG).

Belongs to the TatA/E family. In terms of assembly, forms a complex with TatC.

Its subcellular location is the cell inner membrane. Its function is as follows. Part of the twin-arginine translocation (Tat) system that transports large folded proteins containing a characteristic twin-arginine motif in their signal peptide across membranes. TatA could form the protein-conducting channel of the Tat system. The chain is Sec-independent protein translocase protein TatA from Chlorobium phaeobacteroides (strain DSM 266 / SMG 266 / 2430).